A 271-amino-acid polypeptide reads, in one-letter code: Protein CDV3 homolog (271 aa).

Positions 37 to 47 (KREVVKPKKPE) are enriched in basic and acidic residues. Disordered stretches follow at residues 37–151 (KREV…GHGP) and 186–271 (SQQA…DEAS). The segment covering 48-61 (VAAGGVAVVGENEN) has biased composition (low complexity). Over residues 73-82 (VEEEWKEFEE) the composition is skewed to acidic residues. A compositionally biased stretch (polar residues) spans 95–114 (QLSTISSARSRTAQESSESQ). Position 134 is a phosphoserine (Ser-134). A compositionally biased stretch (basic and acidic residues) spans 224 to 242 (RPEEQRKKKNEPAFEEVRH).

This sequence belongs to the CDV3 family.

The sequence is that of Protein CDV3 homolog from Drosophila melanogaster (Fruit fly).